Reading from the N-terminus, the 104-residue chain is Urease subunit beta (104 aa).

It belongs to the urease beta subunit family. Heterotrimer of UreA (gamma), UreB (beta) and UreC (alpha) subunits. Three heterotrimers associate to form the active enzyme.

It localises to the cytoplasm. It carries out the reaction urea + 2 H2O + H(+) = hydrogencarbonate + 2 NH4(+). It participates in nitrogen metabolism; urea degradation; CO(2) and NH(3) from urea (urease route): step 1/1. The sequence is that of Urease subunit beta from Methylocella silvestris (strain DSM 15510 / CIP 108128 / LMG 27833 / NCIMB 13906 / BL2).